The chain runs to 310 residues: MLDANKLQQAVDQAYTQFHSLNGGQNADYIPFLANVPGQLAAVAIVTCDGNVYSAGDSDYRFALESISKVCTLALALEDVGPQAVQDKIGADPTGLPFNSVIALELHGGKPLSPLVNAGAIATTSLINAENAEQRWQRILHIQQQLAGEQVALSDEVNQSEQTTNFHNRAIAWLLYSAGYLYCDAMEACDVYTRQCSTLINTVELATLGATLAAGGVNPLTHKRVLQADNVPYILAEMMMEGLYGRSGDWAYRVGLPGKSGVGGGILAVVPGVMGIAAFSPPLDEEGNSVRGQKMVASVAKQLGYNVFKG.

Substrate-binding residues include serine 66, asparagine 117, glutamate 161, asparagine 168, tyrosine 192, tyrosine 244, and valine 262. Position 294 is an N6-acetyllysine (lysine 294).

The protein belongs to the glutaminase family. As to quaternary structure, homotetramer.

It carries out the reaction L-glutamine + H2O = L-glutamate + NH4(+). The chain is Glutaminase 1 from Shigella flexneri.